A 354-amino-acid chain; its full sequence is Peptide chain release factor 1 (354 aa).

At Gln230 the chain carries N5-methylglutamine.

The protein belongs to the prokaryotic/mitochondrial release factor family. Post-translationally, methylated by PrmC. Methylation increases the termination efficiency of RF1.

It is found in the cytoplasm. Its function is as follows. Peptide chain release factor 1 directs the termination of translation in response to the peptide chain termination codons UAG and UAA. This is Peptide chain release factor 1 from Thermus thermophilus (strain ATCC BAA-163 / DSM 7039 / HB27).